The sequence spans 1069 residues: Cellulose synthase A catalytic subunit 5 [UDP-forming] (1069 aa).

Met-1 carries the N-acetylmethionine modification. At 1-265 (MNTGGRLIAG…KSSKINPYRM (265 aa)) the chain is on the cytoplasmic side. Cys-39, Cys-42, Cys-58, Cys-61, Cys-66, Cys-69, Cys-81, and Cys-84 together coordinate Zn(2+). An RING-type; degenerate zinc finger spans residues 39 to 85 (CQICGDEIELSVDGESFVACNECAFPVCRPCYEYERREGNQSCPQCK). Ser-229 and Ser-230 each carry phosphoserine. A helical transmembrane segment spans residues 266-286 (LIVLRLVILGLFFHYRILHPV). Topologically, residues 287 to 288 (ND) are extracellular. The helical transmembrane segment at 289 to 309 (AYALWLISVICEIWFAVSWVL) threads the bilayer. Residues 310–853 (DQFPKWYPIE…INSVVYPWTS (544 aa)) are Cytoplasmic-facing. Positions 348, 354, 355, and 384 each coordinate UDP-alpha-D-glucose. Residue Asp-384 is part of the active site. Residues 438–464 (VRERRAMKRDYEEFKVKINALVATAQK) are a coiled coil. Lys-525 contributes to the UDP-alpha-D-glucose binding site. 2 residues coordinate Mn(2+): Lys-526 and Asp-550. The active site involves Asp-770. The helical transmembrane segment at 854–874 (IPLLVYCSLPAICLLTGKFIV) threads the bilayer. At 875–879 (PEISN) the chain is on the extracellular side. A helical transmembrane segment spans residues 880–900 (YASILFMALFGSIAVTGILEM). The Cytoplasmic segment spans residues 901–915 (QWGKVGIDDWWRNEQ). A helical transmembrane segment spans residues 916–936 (FWVIGGVSAHLFALFQGLLKV). Residues 937 to 965 (LAGVETNFTVTSKAADDGEFSELYIFKWT) are Extracellular-facing. Asn-943 carries an N-linked (GlcNAc...) asparagine glycan. A helical transmembrane segment spans residues 966–986 (SLLIPPTTLLIINVIGVIVGI). At 987-997 (SDAISNGYDSW) the chain is on the cytoplasmic side. Residues 998 to 1018 (GPLFGRLFFAFWVILHLYPFL) form a helical membrane-spanning segment. Residues 1019–1027 (KGLLGKQDR) are Extracellular-facing. A helical transmembrane segment spans residues 1028-1048 (MPTIILVWSILLASILTLLWV). The Cytoplasmic portion of the chain corresponds to 1049–1069 (RVNPFVAKGGPILEICGLDCL).

It belongs to the glycosyltransferase 2 family. Plant cellulose synthase subfamily. Zn(2+) serves as cofactor. It depends on Mn(2+) as a cofactor. As to expression, expressed in young plants, stems and flowers.

It is found in the cell membrane. It carries out the reaction [(1-&gt;4)-beta-D-glucosyl](n) + UDP-alpha-D-glucose = [(1-&gt;4)-beta-D-glucosyl](n+1) + UDP + H(+). It participates in glycan metabolism; plant cellulose biosynthesis. Its function is as follows. Catalytic subunit of cellulose synthase terminal complexes ('rosettes'), required for beta-1,4-glucan microfibril crystallization, a major mechanism of the cell wall formation. This chain is Cellulose synthase A catalytic subunit 5 [UDP-forming], found in Arabidopsis thaliana (Mouse-ear cress).